Here is a 223-residue protein sequence, read N- to C-terminus: ATP synthase subunit a 1 (223 aa).

Helical transmembrane passes span 20–40 (LTIA…AFAS), 78–98 (YLPY…CTII), 108–128 (LSTT…FGIA), 174–194 (MILA…MSVL), and 196–216 (LLTG…YISA).

It belongs to the ATPase A chain family. F-type ATPases have 2 components, CF(1) - the catalytic core - and CF(0) - the membrane proton channel. CF(1) has five subunits: alpha(3), beta(3), gamma(1), delta(1), epsilon(1). CF(0) has four main subunits: a, b, b' and c.

It localises to the cell inner membrane. In terms of biological role, key component of the proton channel; it plays a direct role in the translocation of protons across the membrane. The polypeptide is ATP synthase subunit a 1 (Chlorobium luteolum (strain DSM 273 / BCRC 81028 / 2530) (Pelodictyon luteolum)).